Reading from the N-terminus, the 741-residue chain is MAAKDDLILTIDSDGDEIVYSEESEAEVEISVKKVKNKKNKKSKAQPQQKEEDEEKNEDINPNFIFSLDGIETTSKFDGWDFSVDRNANEVANKEVDLDGILRRKGGLVSLAGSDAQKEEEVEDEEEEENDEDIQNEDEDEGEEELALDGFGMGAEEKVIDEEDEEDEEDENDKSDGEDDKDTEVEVSEEGEEENDEDTAEAMAEFYADEKETKSAKSQVHTTFQTLQLSRPVLKGLSQLGYTKPSPIQSASIPIALLGRDIVAGAVTGSGKTAAYMIPIIERLLYKPSKVASTRVIVLTPTRELAIQVGDVGKKIGQFVNNLNFGLAVGGLNLRQQEQQLKSRPDVVIATPGRLIDHIRNSPSFSIDSLEVLVIDEADRMLDEGFQVELTEILSLIPKNKRQTLLFSATMNTKIQDLIQLSLQRPVRIMIDPPKTAATKLTQEFVRIRKRDHLKPALLFQLLKKLDPAQQSRIVVFVSRKESAHKLRIVLGLLGMKVSELHGSLTQEQRLNNVNDFKKLIVPVLICTDLAARGLDIPKIEIVINYDMPKSHEVYLHRVGRTARAGRDGTSISFVGESTSDRNIVKDAIKSLEGGEVKGKAVSRNIDWVDVEQLNKIVESKQEIIEEVLDEEKQAKEILQAEMQLAKASNMMKHEKEIQSRPKRTWFESEKDKKKHQTEVMQQLTKHGKKVNSKKRKAIEVKKDDGGRSYKKTKVDRITDQKRNPKAKIGNGSSKGGKRRK.

Over residues 35–44 the composition is skewed to basic residues; sequence VKNKKNKKSK. 2 disordered regions span residues 35–63 and 106–200; these read VKNKKNKKSKAQPQQKEEDEEKNEDINPN and GGLV…EDTA. Acidic residues-rich tracts occupy residues 118-147 and 159-200; these read KEEEVEDEEEEENDEDIQNEDEDEGEEELA and VIDE…EDTA. The Q motif signature appears at 222-250; that stretch reads TTFQTLQLSRPVLKGLSQLGYTKPSPIQS. Residues 253-429 enclose the Helicase ATP-binding domain; it reads IPIALLGRDI…QLSLQRPVRI (177 aa). 266–273 is a binding site for ATP; the sequence is AVTGSGKT. The DEAD box signature appears at 376–379; that stretch reads DEAD. Residues 458–603 form the Helicase C-terminal domain; that stretch reads LLFQLLKKLD…GGEVKGKAVS (146 aa). Residues 610–657 are a coiled coil; that stretch reads DVEQLNKIVESKQEIIEEVLDEEKQAKEILQAEMQLAKASNMMKHEKE. Residues 650 to 741 are disordered; the sequence is NMMKHEKEIQ…GSSKGGKRRK (92 aa). Over residues 652 to 672 the composition is skewed to basic and acidic residues; that stretch reads MKHEKEIQSRPKRTWFESEKD. The segment covering 686 to 697 has biased composition (basic residues); it reads KHGKKVNSKKRK. Basic and acidic residues predominate over residues 698–723; it reads AIEVKKDDGGRSYKKTKVDRITDQKR.

It belongs to the DEAD box helicase family. DDX27/DRS1 subfamily. As to quaternary structure, associates with pre-ribosomal particles.

It localises to the nucleus. It is found in the nucleolus. It catalyses the reaction ATP + H2O = ADP + phosphate + H(+). Functionally, ATP-binding RNA helicase involved in ribosome assembly. The chain is ATP-dependent RNA helicase DRS1 (DRS1) from Scheffersomyces stipitis (strain ATCC 58785 / CBS 6054 / NBRC 10063 / NRRL Y-11545) (Yeast).